The chain runs to 480 residues: Ribosomal protein uS12 methylthiotransferase RimO (480 aa).

Residues 14–135 form the MTTase N-terminal domain; the sequence is LSVAMVTLGC…IAARLRSIVA (122 aa). [4Fe-4S] cluster contacts are provided by Cys23, Cys59, Cys98, Cys193, Cys197, and Cys200. Residues 179–410 enclose the Radical SAM core domain; sequence LDDGPTAALK…DLVEELTSQR (232 aa). A TRAM domain is found at 412–480; the sequence is AERLGEQVEV…EGADLDARPL (69 aa).

This sequence belongs to the methylthiotransferase family. RimO subfamily. [4Fe-4S] cluster serves as cofactor.

The protein resides in the cytoplasm. The enzyme catalyses L-aspartate(89)-[ribosomal protein uS12]-hydrogen + (sulfur carrier)-SH + AH2 + 2 S-adenosyl-L-methionine = 3-methylsulfanyl-L-aspartate(89)-[ribosomal protein uS12]-hydrogen + (sulfur carrier)-H + 5'-deoxyadenosine + L-methionine + A + S-adenosyl-L-homocysteine + 2 H(+). Functionally, catalyzes the methylthiolation of an aspartic acid residue of ribosomal protein uS12. The protein is Ribosomal protein uS12 methylthiotransferase RimO of Nocardioides sp. (strain ATCC BAA-499 / JS614).